We begin with the raw amino-acid sequence, 153 residues long: Superoxide dismutase [Cu-Zn] (153 aa).

Cu cation contacts are provided by His45, His47, and His62. The cysteines at positions 56 and 145 are disulfide-linked. Zn(2+) contacts are provided by His62, His70, His79, and Asp82. His119 is a binding site for Cu cation.

It belongs to the Cu-Zn superoxide dismutase family. As to quaternary structure, homodimer. It depends on Cu cation as a cofactor. Zn(2+) is required as a cofactor.

It is found in the cytoplasm. The catalysed reaction is 2 superoxide + 2 H(+) = H2O2 + O2. Its function is as follows. Destroys radicals which are normally produced within the cells and which are toxic to biological systems. The sequence is that of Superoxide dismutase [Cu-Zn] from Drosophila virilis (Fruit fly).